The sequence spans 88 residues: Large ribosomal subunit protein bL27 (88 aa).

The segment at 1–25 is disordered; sequence MAHKKAGGSSRNGRDSPGQRRGIKR.

This sequence belongs to the bacterial ribosomal protein bL27 family.

This chain is Large ribosomal subunit protein bL27 (rpmA), found in Lawsonia intracellularis.